A 148-amino-acid chain; its full sequence is Deoxyuridine 5'-triphosphate nucleotidohydrolase (148 aa).

Residues arginine 65–glycine 67, asparagine 78, threonine 82–aspartate 84, and lysine 92 contribute to the substrate site.

This sequence belongs to the dUTPase family. Requires Mg(2+) as cofactor.

It catalyses the reaction dUTP + H2O = dUMP + diphosphate + H(+). It participates in pyrimidine metabolism; dUMP biosynthesis; dUMP from dCTP (dUTP route): step 2/2. This enzyme is involved in nucleotide metabolism: it produces dUMP, the immediate precursor of thymidine nucleotides and it decreases the intracellular concentration of dUTP so that uracil cannot be incorporated into DNA. In Chlorobium luteolum (strain DSM 273 / BCRC 81028 / 2530) (Pelodictyon luteolum), this protein is Deoxyuridine 5'-triphosphate nucleotidohydrolase.